The chain runs to 489 residues: 3-octaprenyl-4-hydroxybenzoate carboxy-lyase (489 aa).

A Mn(2+)-binding site is contributed by Asn-172. Prenylated FMN is bound by residues 175 to 177, 189 to 191, and 194 to 195; these read IYR, RWL, and RG. Glu-238 serves as a coordination point for Mn(2+). The Proton donor role is filled by Asp-287.

It belongs to the UbiD family. In terms of assembly, homohexamer. The cofactor is prenylated FMN. Mn(2+) is required as a cofactor.

The protein localises to the cell membrane. It carries out the reaction a 4-hydroxy-3-(all-trans-polyprenyl)benzoate + H(+) = a 2-(all-trans-polyprenyl)phenol + CO2. It functions in the pathway cofactor biosynthesis; ubiquinone biosynthesis. Its function is as follows. Catalyzes the decarboxylation of 3-octaprenyl-4-hydroxy benzoate to 2-octaprenylphenol, an intermediate step in ubiquinone biosynthesis. The chain is 3-octaprenyl-4-hydroxybenzoate carboxy-lyase from Aeromonas salmonicida (strain A449).